Reading from the N-terminus, the 231-residue chain is MKRAVVVFSGGQDSTTCLAQARHQYDEVHCVTFDYGQRHRAEIDVARALALKLGARAHKVLDVTLLNELAVSSLTRDSIPVPDYEPNADGIPNTFVPGRNILFLTLAAIYAYQVKAEAVITGVCETDFSGYPDCRDEFVKALNHAVNLGMAKDIRFETPLMWIDKAETWALADYWGQLDLVREETLTCYNGIKGDGCGHCAACNLRANGLNHYLSNKAAVMAAMKQKTGLR.

Position 8–18 (8–18 (FSGGQDSTTCL)) interacts with ATP. Zn(2+) is bound by residues C188, C197, C200, and C203.

It belongs to the QueC family. The cofactor is Zn(2+).

The enzyme catalyses 7-carboxy-7-deazaguanine + NH4(+) + ATP = 7-cyano-7-deazaguanine + ADP + phosphate + H2O + H(+). It participates in purine metabolism; 7-cyano-7-deazaguanine biosynthesis. Catalyzes the ATP-dependent conversion of 7-carboxy-7-deazaguanine (CDG) to 7-cyano-7-deazaguanine (preQ(0)). The protein is 7-cyano-7-deazaguanine synthase of Salmonella agona (strain SL483).